Reading from the N-terminus, the 156-residue chain is Probable succinate transporter subunit YjjB (156 aa).

The next 4 helical transmembrane spans lie at 7 to 27, 54 to 74, 86 to 106, and 128 to 148; these read WALL…AMVF, FGMN…IIGI, VFTV…TAMI, and FLKA…PGIW.

This sequence belongs to the ThrE exporter (TC 2.A.79) family. As to quaternary structure, the transporter is composed of YjjB and YjjP.

It is found in the cell inner membrane. Involved in succinate export with YjjP. Both proteins are required for export. In Pectobacterium atrosepticum (strain SCRI 1043 / ATCC BAA-672) (Erwinia carotovora subsp. atroseptica), this protein is Probable succinate transporter subunit YjjB.